We begin with the raw amino-acid sequence, 187 residues long: Ribosome-recycling factor (187 aa).

The protein belongs to the RRF family.

It is found in the cytoplasm. Its function is as follows. Responsible for the release of ribosomes from messenger RNA at the termination of protein biosynthesis. May increase the efficiency of translation by recycling ribosomes from one round of translation to another. This Orientia tsutsugamushi (strain Boryong) (Rickettsia tsutsugamushi) protein is Ribosome-recycling factor.